The chain runs to 352 residues: Probable transcription factor At1g11510 (352 aa).

Disordered stretches follow at residues 1–132 (MSRR…GGEE) and 239–269 (MKSN…KNNC). A compositionally biased stretch (acidic residues) spans 56 to 66 (SGSDEETDSDS). Basic and acidic residues-rich tracts occupy residues 89 to 101 (KTSE…RSLE), 117 to 132 (VSGE…GGEE), and 241 to 259 (SNEK…HELD).

The protein belongs to the GeBP family.

This is Probable transcription factor At1g11510 from Arabidopsis thaliana (Mouse-ear cress).